The chain runs to 275 residues: 3-methyl-2-oxobutanoate hydroxymethyltransferase (275 aa).

Residues Asp49 and Asp88 each coordinate Mg(2+). 3-methyl-2-oxobutanoate is bound by residues 49-50, Asp88, and Lys118; that span reads DS. Glu120 contacts Mg(2+). Catalysis depends on Glu187, which acts as the Proton acceptor.

It belongs to the PanB family. Homodecamer; pentamer of dimers. Requires Mg(2+) as cofactor.

The protein localises to the cytoplasm. It catalyses the reaction 3-methyl-2-oxobutanoate + (6R)-5,10-methylene-5,6,7,8-tetrahydrofolate + H2O = 2-dehydropantoate + (6S)-5,6,7,8-tetrahydrofolate. The protein operates within cofactor biosynthesis; (R)-pantothenate biosynthesis; (R)-pantoate from 3-methyl-2-oxobutanoate: step 1/2. Functionally, catalyzes the reversible reaction in which hydroxymethyl group from 5,10-methylenetetrahydrofolate is transferred onto alpha-ketoisovalerate to form ketopantoate. This Bartonella henselae (strain ATCC 49882 / DSM 28221 / CCUG 30454 / Houston 1) (Rochalimaea henselae) protein is 3-methyl-2-oxobutanoate hydroxymethyltransferase.